Here is a 72-residue protein sequence, read N- to C-terminus: MKKILFSMFYSILVGEEPDSVFLKKEGKQNQVKMIWVAPSSCAKDLTISEGTGATFLFNFHSRVSICFHALF.

This sequence belongs to the ycf76 family.

It localises to the plastid. Its subcellular location is the chloroplast. This is an uncharacterized protein from Oryza nivara (Indian wild rice).